Consider the following 185-residue polypeptide: Elongation factor P (185 aa).

Belongs to the elongation factor P family.

It localises to the cytoplasm. The protein operates within protein biosynthesis; polypeptide chain elongation. In terms of biological role, involved in peptide bond synthesis. Stimulates efficient translation and peptide-bond synthesis on native or reconstituted 70S ribosomes in vitro. Probably functions indirectly by altering the affinity of the ribosome for aminoacyl-tRNA, thus increasing their reactivity as acceptors for peptidyl transferase. This Clostridium tetani (strain Massachusetts / E88) protein is Elongation factor P.